Reading from the N-terminus, the 384-residue chain is S-adenosylmethionine synthase (384 aa).

His15 contacts ATP. Asp17 is a binding site for Mg(2+). Residue Glu43 coordinates K(+). Residues Glu56 and Gln99 each coordinate L-methionine. Residues 99 to 109 (QSPDINQGVDR) are flexible loop. ATP is bound by residues 164–166 (DAK), 230–231 (RF), Asp239, 245–246 (RK), Ala262, and Lys266. Asp239 lines the L-methionine pocket. Position 270 (Lys270) interacts with L-methionine.

This sequence belongs to the AdoMet synthase family. As to quaternary structure, homotetramer; dimer of dimers. It depends on Mg(2+) as a cofactor. K(+) serves as cofactor.

Its subcellular location is the cytoplasm. It catalyses the reaction L-methionine + ATP + H2O = S-adenosyl-L-methionine + phosphate + diphosphate. Its pathway is amino-acid biosynthesis; S-adenosyl-L-methionine biosynthesis; S-adenosyl-L-methionine from L-methionine: step 1/1. Its function is as follows. Catalyzes the formation of S-adenosylmethionine (AdoMet) from methionine and ATP. The overall synthetic reaction is composed of two sequential steps, AdoMet formation and the subsequent tripolyphosphate hydrolysis which occurs prior to release of AdoMet from the enzyme. In Enterobacter sp. (strain 638), this protein is S-adenosylmethionine synthase.